The primary structure comprises 306 residues: Tyrosine recombinase XerC (306 aa).

A Core-binding (CB) domain is found at 10–94; it reads ARCHSYLQQF…AVKQWGEFLL (85 aa). The 180-residue stretch at 115-294 folds into the Tyr recombinase domain; the sequence is PLPKNIDVDS…DFQHLAKVYD (180 aa). Active-site residues include R154, K178, H246, R249, and H272. Y281 functions as the O-(3'-phospho-DNA)-tyrosine intermediate in the catalytic mechanism.

It belongs to the 'phage' integrase family. XerC subfamily. Forms a cyclic heterotetrameric complex composed of two molecules of XerC and two molecules of XerD.

Its subcellular location is the cytoplasm. In terms of biological role, site-specific tyrosine recombinase, which acts by catalyzing the cutting and rejoining of the recombining DNA molecules. The XerC-XerD complex is essential to convert dimers of the bacterial chromosome into monomers to permit their segregation at cell division. It also contributes to the segregational stability of plasmids. In Shewanella oneidensis (strain ATCC 700550 / JCM 31522 / CIP 106686 / LMG 19005 / NCIMB 14063 / MR-1), this protein is Tyrosine recombinase XerC.